Reading from the N-terminus, the 698-residue chain is Protein artemis (698 aa).

Thr380 carries the phosphothreonine modification. Residue Ser385 is modified to Phosphoserine. Disordered stretches follow at residues 445–485 (ANFV…DPDV), 505–595 (LENL…DSIS), and 620–669 (NGVP…LPKP). Positions 449–461 (DCDESNSDSEGEL) are enriched in acidic residues. The segment covering 508-521 (LPSSIETGGSQSPK) has biased composition (polar residues). Residues 538–551 (THISSQNSSQSTHI) show a composition bias toward low complexity. A compositionally biased stretch (polar residues) spans 552-583 (TDQGSQGWDSQCDTVLLSSQEKSGGDSTSLNK). Residues 641–655 (TSLTSTQADSQSSSD) show a composition bias toward low complexity. Phosphoserine; by ATM is present on Ser650.

The protein belongs to the DNA repair metallo-beta-lactamase (DRMBL) family. In terms of assembly, interacts with LIG4; the interaction is direct. Interacts with ATM. Interacts with BRCA1. Interacts with PRKDC. Interacts with TP53BP1. Also exhibits ATM- and phosphorylation-dependent interaction with the MRN complex, composed of MRE11, RAD50, and NBN. In terms of processing, phosphorylation on undefined residues by PRKDC may stimulate endonucleolytic activity on 5' and 3' hairpins and overhangs. PRKDC must remain present, even after phosphorylation, for efficient hairpin opening. Also phosphorylated by ATM in response to ionizing radiation (IR) and by ATR in response to ultraviolet (UV) radiation.

Its subcellular location is the nucleus. In terms of biological role, required for V(D)J recombination, the process by which exons encoding the antigen-binding domains of immunoglobulins and T-cell receptor proteins are assembled from individual V, (D), and J gene segments. V(D)J recombination is initiated by the lymphoid specific RAG endonuclease complex, which generates site specific DNA double strand breaks (DSBs). These DSBs present two types of DNA end structures: hairpin sealed coding ends and phosphorylated blunt signal ends. These ends are independently repaired by the non homologous end joining (NHEJ) pathway to form coding and signal joints respectively. This protein exhibits single-strand specific 5'-3' exonuclease activity in isolation, and acquires endonucleolytic activity on 5' and 3' hairpins and overhangs when in a complex with PRKDC. The latter activity is required specifically for the resolution of closed hairpins prior to the formation of the coding joint. May also be required for the repair of complex DSBs induced by ionizing radiation, which require substantial end-processing prior to religation by NHEJ. The polypeptide is Protein artemis (Dclre1c) (Rattus norvegicus (Rat)).